The chain runs to 87 residues: Apoptosis inducing factor BLCAP B (87 aa).

The next 2 membrane-spanning stretches (helical) occupy residues 19 to 39 (PALW…FLLE) and 43 to 63 (CTIC…SCWG).

It belongs to the BLCAP family.

The protein localises to the cytoplasm. Its subcellular location is the nucleus. The protein resides in the membrane. Functionally, acts as a tumor suppressor; induces growth arrest at G(1)/S checkpoint and apoptosis via RB1-dependent and p53/TP53- and NF-kappa-B-independent mechanisms. Modulates expression of genes involved in the regulation of proliferation, cell cycle and apoptosis. This chain is Apoptosis inducing factor BLCAP B (blcap-b), found in Xenopus laevis (African clawed frog).